Reading from the N-terminus, the 205-residue chain is Casparian strip membrane protein 4 (205 aa).

At 1-58 the chain is on the cytoplasmic side; sequence MDIEKTGSRREEEEPIVQKPKLEKGKGKAHVFAPPMNYSRIMEKHKQEKVSMAGWKRG. A helical membrane pass occupies residues 59–79; the sequence is VAIFDFVLRLIAAITAMAAAA. Over 80–109 the chain is Extracellular; that stretch reads KMATTEETLPFFTQFLQFSADYTDLPTLSS. The chain crosses the membrane as a helical span at residues 110–130; sequence FVIVNSIVGGYLTLSLPFSIV. At 131 to 148 the chain is on the cytoplasmic side; that stretch reads CILRPLAVPPRLFLILCD. The chain crosses the membrane as a helical span at residues 149-169; it reads TAMMGLTMVAASASAAIVYLA. Residues 170 to 205 are Extracellular-facing; sequence HNGNSSSNWLPVCQQFGDFCKERVAPWWLPLLQRLF. Asn173 carries N-linked (GlcNAc...) asparagine glycosylation.

The protein belongs to the Casparian strip membrane proteins (CASP) family. In terms of assembly, homodimer and heterodimers.

The protein resides in the cell membrane. In terms of biological role, regulates membrane-cell wall junctions and localized cell wall deposition. Required for establishment of the Casparian strip membrane domain (CSD) and the subsequent formation of Casparian strips, a cell wall modification of the root endodermis that determines an apoplastic barrier between the intraorganismal apoplasm and the extraorganismal apoplasm and prevents lateral diffusion. This Raphanus sativus (Radish) protein is Casparian strip membrane protein 4.